Here is a 73-residue protein sequence, read N- to C-terminus: Large ribosomal subunit protein bL31 (73 aa).

The segment covering 34–43 (KMNLDIDPKS) has biased composition (basic and acidic residues). Positions 34–54 (KMNLDIDPKSHPAWTGGTQQM) are disordered.

This sequence belongs to the bacterial ribosomal protein bL31 family. Type A subfamily. Part of the 50S ribosomal subunit.

In terms of biological role, binds the 23S rRNA. This chain is Large ribosomal subunit protein bL31, found in Rhodopseudomonas palustris (strain BisA53).